The chain runs to 267 residues: Octanoyltransferase (267 aa).

A BPL/LPL catalytic domain is found at 77-265; it reads GTASELVWLV…AFESVFGPRQ (189 aa). Substrate contacts are provided by residues 116–123, 196–198, and 209–211; these read RGGEYTYH, AIG, and GIA. Catalysis depends on Cys-227, which acts as the Acyl-thioester intermediate.

The protein belongs to the LipB family.

The protein localises to the cytoplasm. It catalyses the reaction octanoyl-[ACP] + L-lysyl-[protein] = N(6)-octanoyl-L-lysyl-[protein] + holo-[ACP] + H(+). Its pathway is protein modification; protein lipoylation via endogenous pathway; protein N(6)-(lipoyl)lysine from octanoyl-[acyl-carrier-protein]: step 1/2. Catalyzes the transfer of endogenously produced octanoic acid from octanoyl-acyl-carrier-protein onto the lipoyl domains of lipoate-dependent enzymes. Lipoyl-ACP can also act as a substrate although octanoyl-ACP is likely to be the physiological substrate. In Brucella suis biovar 1 (strain 1330), this protein is Octanoyltransferase.